We begin with the raw amino-acid sequence, 333 residues long: Chitinase-like protein 2 (333 aa).

Residues 1-27 (MVSKPLFSLLLLTVALVVFQTGTLVNA) form the signal peptide. A disulfide bridge connects residues C50 and C56. An N-linked (GlcNAc...) asparagine glycan is attached at N65. Cysteines 165 and 175 form a disulfide. N-linked (GlcNAc...) asparagine glycans are attached at residues N216 and N252. C275 and C313 are oxidised to a cystine. The tract at residues 307 to 333 (PHEKLSCADQEPFSSSSSAPPSSGSSS) is disordered. Over residues 320–333 (SSSSSAPPSSGSSS) the composition is skewed to low complexity.

Belongs to the glycosyl hydrolase 19 family. Mostly expressed in stems, especially in xylem and interfascicular fibers.

It localises to the secreted. Functionally, no chitinase activity. Required for proper cell wall biosynthesis in etiolated seedlings. Prevents lignin accumulation in hypocotyls. This chain is Chitinase-like protein 2 (CTL2), found in Arabidopsis thaliana (Mouse-ear cress).